A 372-amino-acid polypeptide reads, in one-letter code: uncharacterized protein (372 aa).

A disordered region spans residues 328 to 353; that stretch reads KKGQPCKDEDAVTVPLPSSDPGKETQ.

Its function is as follows. Induces the SOS system when expressed in E.coli, therefore, it may play a role in DNA metabolism and/or in genome stability. This is an uncharacterized protein from Saccharomyces cerevisiae (strain ATCC 204508 / S288c) (Baker's yeast).